The following is a 661-amino-acid chain: Solute carrier organic anion transporter family member 1A4 (661 aa).

At 1–20 (MGKSEKRVATHGVRCFAKIK) the chain is on the cytoplasmic side. A helical membrane pass occupies residues 21–40 (MFLLALTCAYVSKSLSGTYM). The Extracellular portion of the chain corresponds to 41–59 (NSMLTQIERQFGIPTSIVG). Residues 60 to 80 (LINGSFEIGNLLLIIFVSYFG) form a helical membrane-spanning segment. The Cytoplasmic segment spans residues 81-86 (TKLHRP). The chain crosses the membrane as a helical span at residues 87–111 (IMIGVGCAVMGLGCFLISLPHFLMG). Topologically, residues 112–154 (QYEYETILPTSNVSSNSFFCVENRSQTLNPTQDPSECVKEMKS) are extracellular. N-linked (GlcNAc...) asparagine glycans are attached at residues Asn-123 and Asn-134. The helical transmembrane segment at 155 to 183 (LMWIYVLVGNIIRGIGETPIMPLGISYIE) threads the bilayer. The Cytoplasmic segment spans residues 184–202 (DFAKSENSPLYIGILETGM). Residues 203-223 (TIGPLIGLLLASSCANIYVDI) form a helical membrane-spanning segment. The Extracellular segment spans residues 224 to 241 (ESVNTDDLTITPTDTRWV). Residues 242–266 (GAWWIGFLVCAGVNILTSFPFFFFP) traverse the membrane as a helical segment. At 267–310 (KTLPKEGLQENVDGTENAKEKKHRKKAKEEKRGITKDFFVFMKS) the chain is on the cytoplasmic side. The chain crosses the membrane as a helical span at residues 311-332 (LSCNPIYMLFILISVLQFNAFI). Over 333 to 352 (NSFTFMPKYLEQQYGKSTAE) the chain is Extracellular. A helical membrane pass occupies residues 353-376 (VVFLMGLYMLPPICLGYLIGGLIM). The Cytoplasmic segment spans residues 377–380 (KKFK). Residues 381–404 (VTVKKAAHLAFWLCLSEYLLSFLS) form a helical membrane-spanning segment. The Extracellular segment spans residues 405 to 512 (YVMTCDNFPV…PDCANKLQYF (108 aa)). One can recognise a Kazal-like domain in the interval 432–487 (NKVLADCNTRCNCSTNTWDPVCGDNGLAYMSACLAGCEKSVGTGTNMVFQNCSCIQ). Cystine bridges form between Cys-438–Cys-468, Cys-444–Cys-464, and Cys-453–Cys-485. Asn-443 is a glycosylation site (N-linked (GlcNAc...) asparagine). Residues Asn-482 and Asn-491 are each glycosylated (N-linked (GlcNAc...) asparagine). A helical transmembrane segment spans residues 513-535 (LIIAIFGCFIYSLAGIPGYMVLL). Over 536-544 (RCIKSEEKS) the chain is Cytoplasmic. The chain crosses the membrane as a helical span at residues 545-570 (LGVGLHAFCIRILAGIPAPIYFGALI). Residues 571-604 (DRTCLHWGTLKCGEPGACRMYDINSFRRLYLGLP) are Extracellular-facing. Residues 605–622 (AALRGASFVPAFFILRLT) traverse the membrane as a helical segment. The Cytoplasmic segment spans residues 623-661 (RTFQFPGDIESSKTDHAEMKLTLKESECTEVLRSKVTED). Phosphoserine occurs at positions 633 and 634.

It belongs to the organo anion transporter (TC 2.A.60) family. Highly expressed in brain, liver, and kidney but not expressed in heart, spleen, lung, skeletal muscle, and testis.

The protein localises to the cell membrane. The catalysed reaction is estrone 3-sulfate(out) = estrone 3-sulfate(in). It carries out the reaction taurocholate(out) = taurocholate(in). It catalyses the reaction prostaglandin E2(out) = prostaglandin E2(in). The enzyme catalyses L-thyroxine(out) = L-thyroxine(in). Mediates the Na(+)-independent transport of organic anions such as taurocholate, cholate, 17-beta-glucuronosyl estradiol, prostaglandin E2, estrone 3-sulfate, L-thyroxine (T4), the cardiac glycosides ouabain and digoxin and thyroid hormones. May play an especially important role in the brain accumulation and toxicity of digoxin and in the hepatobiliary and renal excretion of cardiac glycosides. Shows a pH-sensitive substrate specificity which may be ascribed to the protonation state of the binding site and leads to a stimulation of substrate transport in an acidic microenvironment. Hydrogencarbonate/HCO3(-) acts as the probable counteranion that exchanges for organic anions. This Rattus norvegicus (Rat) protein is Solute carrier organic anion transporter family member 1A4 (Slco1a4).